The chain runs to 461 residues: Protein ultraspiracle homolog (461 aa).

The tract at residues methionine 1 to leucine 112 is modulating. A disordered region spans residues proline 26–threonine 51. The segment covering alanine 27–serine 40 has biased composition (low complexity). The segment covering asparagine 41–threonine 51 has biased composition (polar residues). 2 NR C4-type zinc fingers span residues cysteine 113–cysteine 133 and cysteine 149–cysteine 173. A DNA-binding region (nuclear receptor) is located at residues cysteine 113–glutamate 185. Residues glutamate 185–arginine 192 are hinge. In terms of domain architecture, NR LBD spans valine 203–histidine 452.

The protein belongs to the nuclear hormone receptor family. NR2 subfamily. Heterodimer of USP and ECR. Only the heterodimer is capable of high-affinity binding to ecdysone.

It is found in the nucleus. Receptor for ecdysone. May be an important modulator of insect metamorphosis. In Manduca sexta (Tobacco hawkmoth), this protein is Protein ultraspiracle homolog (USP).